The chain runs to 110 residues: Eukaryotic translation initiation factor eIF1 (110 aa).

The protein belongs to the SUI1 family.

Its function is as follows. Probably involved in translation. The polypeptide is Eukaryotic translation initiation factor eIF1 (Anopheles gambiae (African malaria mosquito)).